Here is a 148-residue protein sequence, read N- to C-terminus: Urease accessory protein UreE (148 aa).

Belongs to the UreE family.

It localises to the cytoplasm. In terms of biological role, involved in urease metallocenter assembly. Binds nickel. Probably functions as a nickel donor during metallocenter assembly. This Bacillus sp. (strain TB-90) protein is Urease accessory protein UreE.